A 513-amino-acid chain; its full sequence is Probable G-protein coupled receptor Mth-like 9 (513 aa).

A signal peptide spans 1–19 (MVSPLIILLIIWLSVGAKS). Residues 20-207 (VEIASINHPC…NCERFQTGYR (188 aa)) are Extracellular-facing. 4 disulfides stabilise this stretch: Cys29–Cys82, Cys84–Cys89, Cys93–Cys181, and Cys94–Cys107. N-linked (GlcNAc...) asparagine glycosylation is present at Asn36. N-linked (GlcNAc...) asparagine glycosylation is found at Asn106, Asn125, and Asn165. Residues 208–228 (VWIYAICSIIAIIINIFILSL) form a helical membrane-spanning segment. The Cytoplasmic portion of the chain corresponds to 229-242 (LGSVRDARKSHYGQ). The helical transmembrane segment at 243-263 (LIIYYLLSMIVGYSLLVYLAL) threads the bilayer. Residues 264-276 (KNPMKLSHVACRN) are Extracellular-facing. The helical transmembrane segment at 277-297 (IGFLAYFCIMLSFVFLAICSL) threads the bilayer. The Cytoplasmic segment spans residues 298–314 (DFLLKFKQKAVRSSVRR). Residues 315 to 335 (LSLALAVLAVIGLRFLVSLAQ) form a helical membrane-spanning segment. Topologically, residues 336-360 (DSKLPKHFKPGMGEDYCWFDVRTWG) are extracellular. A helical membrane pass occupies residues 361–381 (ILIYYYGPIALLLIFSIVCCL). Topologically, residues 382–403 (KAYFSIYELPPDTQYILGTQLK) are cytoplasmic. Residues 404-424 (IVKTHFYAFSAYIVGVFAVWI) form a helical membrane-spanning segment. Residues 425 to 438 (REIVVYIMARVREH) lie on the Extracellular side of the membrane. Residues 439 to 459 (FFIIDFWSGICILGLAIAGFI) form a helical membrane-spanning segment. The Cytoplasmic segment spans residues 460–513 (LLLGKNLHVKSWWAINVESSQTDLSIINARVYKFDEKGDLKSSDSPYKPTVTSL).

Belongs to the G-protein coupled receptor 2 family. Mth subfamily.

The protein localises to the cell membrane. In Drosophila melanogaster (Fruit fly), this protein is Probable G-protein coupled receptor Mth-like 9 (mthl9).